The chain runs to 324 residues: Transcriptional regulator protein Pur-beta (324 aa).

The segment at methionine 1–alanine 47 is disordered. Residue alanine 2 is modified to N-acetylalanine. Serine 6 and serine 8 each carry phosphoserine. The span at glutamate 9–glycine 39 shows a compositional bias: gly residues. Arginine 28 carries the omega-N-methylarginine modification. Positions proline 37–lysine 263 are DNA-binding. The residue at position 43 (threonine 43) is a Phosphothreonine. Serine 113 carries the post-translational modification Phosphoserine. Arginine 164 carries the omega-N-methylarginine modification. An N6-acetyllysine modification is found at lysine 279. Residues arginine 297–glycine 307 are compositionally biased toward basic and acidic residues. Residues arginine 297–aspartate 324 are disordered. Position 306 is an omega-N-methylarginine (arginine 306). Residues serine 310 and serine 316 each carry the phosphoserine modification. A compositionally biased stretch (acidic residues) spans aspartate 314–aspartate 324.

This sequence belongs to the PUR DNA-binding protein family. In terms of assembly, homodimer, heterodimer with PURA and heterotrimer with PURA and YBX1/Y-box protein 1. Interacts with MYOCD and SRF.

The protein resides in the nucleus. Functionally, transcriptional regulator which can act as an activator or a repressor. Represses the transcription of ACTA2 in fibroblasts and smooth muscle cells via its ability to interact with the purine-rich strand of a MCAT-containing element in the 5' flanking region of the gene. Represses the transcription of MYOCD, capable of repressing all isoforms of MYOCD but the magnitude of the repressive effects is most notable for the SMC-specific isoforms. Promotes hepatic glucose production by activating the transcription of ADCY6, leading to cAMP accumulation, increased PKA activity, CREB activation, and increased transcription of PCK1 and G6PC genes. Has capacity to bind repeated elements in single-stranded DNA such as the purine-rich single strand of the PUR element located upstream of the MYC gene. Participates in transcriptional and translational regulation of alpha-MHC expression in cardiac myocytes by binding to the purine-rich negative regulatory (PNR) element. Modulates constitutive liver galectin-3 gene transcription by binding to its promoter. May play a role in the dendritic transport of a subset of mRNAs. The polypeptide is Transcriptional regulator protein Pur-beta (Purb) (Mus musculus (Mouse)).